Here is a 4010-residue protein sequence, read N- to C-terminus: Extracellular matrix organizing protein FRAS1 (4010 aa).

Positions 1–25 (MGVLKAWLGVALALAEFAVLPNCEG) are cleaved as a signal peptide. 5 consecutive VWFC domains span residues 26 to 87 (ACLY…PQCA), 92 to 152 (GSCH…PICV), 156 to 216 (KPCS…SQCS), 218 to 278 (RSCS…EECA), and 282 to 342 (RSCS…PECI). Topologically, residues 26-3903 (ACLYQGSFLA…AASLSQTGAS (3878 aa)) are extracellular. Position 343 is a phosphoserine (S343). One can recognise a VWFC 6 domain in the interval 358–416 (SSSAREIKHVPDGEKWEEGPCKLCECREAQVTCYEPSCPPCPVATLALVVKGQCCPDCT). 14 FU repeats span residues 408–459 (KGQC…GFYQ), 461–504 (GSLC…GFYQ), 506–552 (HHSC…GFYN), 554–598 (QGTC…GYYA), 601–646 (TGSC…GFYP), 648–704 (HGIC…HFYL), 707–752 (TGLC…THFN), 754–799 (EGTC…EQFL), 802–851 (VGYC…GHYK), 853–899 (RGTC…GHYL), 902–947 (NQVC…QYYL), 951–996 (TKTC…QHYR), 998–1041 (SGSC…GYFA), and 1045–1088 (KHRC…GFSG). N727 carries an N-linked (GlcNAc...) asparagine glycan. Residues N1094 and N1107 are each glycosylated (N-linked (GlcNAc...) asparagine). CSPG repeat units follow at residues 1101-1196 (TPSL…LKIS), 1216-1307 (APYV…FQAN), 1328-1440 (ALRL…FQVS), 1465-1561 (APKL…FSFA), 1597-1691 (PAFQ…ISVT), 1712-1812 (GPRL…FSVS), and 1834-1938 (PPHI…FYVS). An N-linked (GlcNAc...) asparagine glycan is attached at N1506. A glycan (N-linked (GlcNAc...) asparagine) is linked at N1779. 2 N-linked (GlcNAc...) asparagine glycosylation sites follow: N1950 and N1980. CSPG repeat units follow at residues 1959–2059 (EPPR…FSLT), 2080–2179 (IPHL…FDVV), 2201–2293 (PPVV…FVLS), 2313–2406 (ARPL…FTVS), and 2441–2538 (TPRI…FLVK). Calx-beta domains follow at residues 2545 to 2648 (VSDN…VGLS), 2661 to 2772 (AKVV…IALA), 2786 to 2892 (AKVL…VFLS), 2907 to 3009 (IAIN…VYLG), and 3027 to 3131 (ATVT…LVLG). N2565, N2666, and N2684 each carry an N-linked (GlcNAc...) asparagine glycan. N-linked (GlcNAc...) asparagine glycosylation is found at N2910, N2987, N3072, N3220, N3678, and N3877. Residues 3904-3924 (IGSALAAIMLLLLLFLVACFV) form a helical membrane-spanning segment. Over 3925–4010 (TRKCQKQKKK…HNNLQDGTEV (86 aa)) the chain is Cytoplasmic.

Belongs to the FRAS1 family.

Its subcellular location is the cell membrane. Involved in extracellular matrix organization. Required for the regulation of epidermal-basement membrane adhesion responsible for proper organogenesis during embryonic development. Involved in brain organization and function. This chain is Extracellular matrix organizing protein FRAS1, found in Mus musculus (Mouse).